The chain runs to 217 residues: Eukaryotic translation initiation factor 4E (217 aa).

Residues 1–30 (MATVEPETTPTPNPPTTEEEKTESNQEVAN) form a disordered region. The residue at position 2 (Ala2) is an N-acetylalanine. Thr22 bears the Phosphothreonine mark. The segment at 37 to 40 (HPLQ) is EIF4EBP1/2/3 binding. 56 to 57 (WQ) contributes to the mRNA binding site. The interval 73–77 (WALYN) is EIF4EBP1/2/3 binding. 102 to 103 (WE) provides a ligand contact to mRNA. Residues 132-139 (ETLLCLIG) are EIF4EBP1/2/3 binding. MRNA-binding positions include 157 to 162 (RAKGDK) and 205 to 207 (TKS). The residue at position 209 (Ser209) is a Phosphoserine; by PKC and MKNK2.

The protein belongs to the eukaryotic initiation factor 4E family. EIF4F is a multi-subunit complex, the composition of which varies with external and internal environmental conditions. It is composed of at least EIF4A, EIF4E and EIF4G1/EIF4G3. EIF4E is also known to interact with other partners. Interacts with EIF4ENIF1/4E-T; promotes recruitment to P-bodies and import into the nucleus. Hypophosphorylated EIF4EBP1, EIF4EBP2 and EIF4EBP3 compete with EIF4G1/EIF4G3 to interact with EIF4E; insulin stimulated MAP-kinase (MAPK1 and MAPK3) phosphorylation of EIF4EBP1 causes dissociation of the complex allowing EIF4G1/EIF4G3 to bind and consequent initiation of translation. Interacts mutually exclusive with EIF4A1 or EIF4A2. Interacts with NGDN and PIWIL2. Component of the CYFIP1-EIF4E-FMR1 complex composed of CYFIP, EIF4E and FMR1. Interacts directly with CYFIP1. Interacts with CLOCK. Binds to MKNK2 in nucleus. Interacts with LIMD1, WTIP and AJUBA. Interacts with APOBEC3G in an RNA-dependent manner. Interacts with LARP1. Interacts with METTL3. Interacts with RBM24; this interaction prevents EIF4E from binding to p53/TP53 mRNA and inhibits the assembly of translation initiation complex. Interacts with DDX3X; interaction is direct and in an RNA-independent manner; this interaction enhances EIF4E cap-binding ability and is required for the repression of cap-dependent translation and the increase of IRES-mediated translation. DDX3X competes with EIF4G1 for interaction with EIF4E. Interacts with EIF4G1; which in a mutual exclusive interaction associates either with EIF1 or with EIF4E on a common binding site. Interacts with BTG4 and CNOT7. Interacts with LRPPRC (via N-terminus); the interaction promotes association of EIF4E with 4ESE-containing mRNAs. Interacts with mRNA cleavage enzyme CPSF3 and its cofactor CPSF1. Interacts (via RING-type zinc finger) with PML; the interaction results in conformational changes of both interacting proteins and reduces EIF4E affinity for the 5' m7G cap of mRNA, thus reducing EIF4E-mediated mRNA nuclear export. Interacts with homeobox protein HHEX/PRH; the interaction inhibits EIF4E-mediated mRNA nuclear export. Interacts with homeobox protein HOXA9; the interaction positively regulates EIF4E-mediated mRNA nuclear export. Interacts with homeobox protein EMX2. As to quaternary structure, (Microbial infection) Interacts with Lassa virus Z protein. In terms of assembly, (Microbial infection) Interacts with Lymphocytic choriomeningitis virus (LCMV) Z protein (via RING-type zinc finger); the interaction results in conformational changes of both interacting proteins and reduces EIF4E affinity for the m7G mRNA cap structure. (Microbial infection) Interacts (via cap-binding region) with potato virus Y VPg; this interaction mediates the translation of the VPg-viral RNA conjugates and interferes with the cellular EIF4E-dependent mRNA export and translation. In terms of processing, phosphorylation increases the ability of the protein to bind to mRNA caps and to form the eIF4F complex. Phosphorylation also enhances its mRNA transport function. Phosphorylation at Ser-209 is not essential for protein synthesis.

Its subcellular location is the cytoplasm. The protein resides in the P-body. It localises to the stress granule. It is found in the nucleus. The protein localises to the nucleus speckle. Its subcellular location is the nuclear body. Acts in the cytoplasm to initiate and regulate protein synthesis and is required in the nucleus for export of a subset of mRNAs from the nucleus to the cytoplasm which promotes processes such as RNA capping, processing and splicing. Component of the protein complex eIF4F, which is involved in the recognition of the mRNA cap, ATP-dependent unwinding of 5'-terminal secondary structure and recruitment of mRNA to the ribosome. This protein recognizes and binds the 7-methylguanosine (m7G)-containing mRNA cap during an early step in the initiation of protein synthesis and facilitates ribosome binding by inducing the unwinding of the mRNAs secondary structures. Together with EIF4G1, antagonizes the scanning promoted by EIF1-EIF4G1 and is required for TISU translation, a process where the TISU element recognition makes scanning unnecessary. In addition to its role in translation initiation, also acts as a regulator of translation and stability in the cytoplasm. Component of the CYFIP1-EIF4E-FMR1 complex which binds to the mRNA cap and mediates translational repression: in the complex, EIF4E mediates the binding to the mRNA cap. Component of a multiprotein complex that sequesters and represses translation of proneurogenic factors during neurogenesis. In P-bodies, component of a complex that mediates the storage of translationally inactive mRNAs in the cytoplasm and prevents their degradation. May play an important role in spermatogenesis through translational regulation of stage-specific mRNAs during germ cell development. As well as its roles in translation, also involved in mRNA nucleocytoplasmic transport. Its role in mRNA export from the nucleus to the cytoplasm relies on its ability to bind the m7G cap of RNAs and on the presence of the 50-nucleotide EIF4E sensitivity element (4ESE) in the 3'UTR of sensitive transcripts. Interaction with the 4ESE is mediated by LRPPRC which binds simultaneously to both EIF4E and the 4ESE, thereby acting as a platform for assembly for the RNA export complex. EIF4E-dependent mRNA export is independent of ongoing protein or RNA synthesis and is also NFX1-independent but is XPO1-dependent with LRPPRC interacting with XPO1 to form an EIF4E-dependent mRNA export complex. Alters the composition of the cytoplasmic face of the nuclear pore to promote RNA export by reducing RANBP2 expression, relocalizing nucleoporin NUP214 and increasing expression of RANBP1 and RNA export factors DDX19 and GLE1. Promotes the nuclear export of cyclin CCND1 mRNA. Promotes the nuclear export of NOS2/iNOS mRNA. Promotes the nuclear export of MDM2 mRNA. Promotes the export of additional mRNAs, including others involved in the cell cycle. In the nucleus, binds to capped splice factor-encoding mRNAs and stimulates their nuclear export to enhance splice factor production by increasing their cytoplasmic availability to the translation machinery. May also regulate splicing through interaction with the spliceosome in an RNA and m7G cap-dependent manner. Also binds to some pre-mRNAs and may play a role in their recruitment to the spliceosome. Promotes steady-state capping of a subset of coding and non-coding RNAs by mediating nuclear export of capping machinery mRNAs including RNMT, RNGTT and RAMAC to enhance their translation. Stimulates mRNA 3'-end processing by promoting the expression of several core cleavage complex factors required for mRNA cleavage and polyadenylation, and may also have a direct effect through its interaction with the CPSF3 cleavage enzyme. Rescues cells from apoptosis by promoting activation of serine/threonine-protein kinase AKT1 through mRNA export of NBS1 which potentiates AKT1 phosphorylation and also through mRNA export of AKT1 effectors, allowing for increased production of these proteins. In Homo sapiens (Human), this protein is Eukaryotic translation initiation factor 4E.